Consider the following 399-residue polypeptide: Ectoine hydrolase (399 aa).

The protein belongs to the peptidase M24 family.

It is found in the cytoplasm. It carries out the reaction L-ectoine + H2O = (2S)-2-acetamido-4-aminobutanoate. Its function is as follows. Involved in the degradation of ectoine, which allows H.elongata to utilize ectoine as both a carbon and a nitrogen source for growth. Catalyzes the hydrolysis of ectoine to N-acetyl-L-2,4-diaminobutyric acid (N-Ac-DABA). It can produce both isoforms N-gamma-acetyl-L-2,4-diaminobutyric acid (N-gamma-Ac-DABA) and N-alpha-acetyl-L-2,4-diaminobutyric acid (-Nalpha-Ac-DABA), however N-alpha-Ac-DABA is the essential substrate for the subsequent catabolic enzyme DoeB. The chain is Ectoine hydrolase from Halomonas elongata (strain ATCC 33173 / DSM 2581 / NBRC 15536 / NCIMB 2198 / 1H9).